We begin with the raw amino-acid sequence, 107 residues long: Putative double-stranded DNA mimic protein ECA2319 (107 aa).

The protein belongs to the putative dsDNA mimic protein family.

Functionally, may act as a double-stranded DNA (dsDNA) mimic. Probably regulates the activity of a dsDNA-binding protein. This Pectobacterium atrosepticum (strain SCRI 1043 / ATCC BAA-672) (Erwinia carotovora subsp. atroseptica) protein is Putative double-stranded DNA mimic protein ECA2319.